Consider the following 353-residue polypeptide: 3-isopropylmalate dehydrogenase (353 aa).

75-88 (GPKWENLPHEHKPE) is an NAD(+) binding site. Substrate is bound by residues Arg-95, Arg-105, Arg-133, and Asp-219. Mg(2+) is bound by residues Asp-219, Asp-243, and Asp-247. 276–288 (GSAPDIAGKNIAN) provides a ligand contact to NAD(+).

The protein belongs to the isocitrate and isopropylmalate dehydrogenases family. LeuB type 1 subfamily. Homodimer. Requires Mg(2+) as cofactor. It depends on Mn(2+) as a cofactor.

The protein resides in the cytoplasm. It carries out the reaction (2R,3S)-3-isopropylmalate + NAD(+) = 4-methyl-2-oxopentanoate + CO2 + NADH. Its pathway is amino-acid biosynthesis; L-leucine biosynthesis; L-leucine from 3-methyl-2-oxobutanoate: step 3/4. Its function is as follows. Catalyzes the oxidation of 3-carboxy-2-hydroxy-4-methylpentanoate (3-isopropylmalate) to 3-carboxy-4-methyl-2-oxopentanoate. The product decarboxylates to 4-methyl-2 oxopentanoate. The chain is 3-isopropylmalate dehydrogenase from Chlorobium luteolum (strain DSM 273 / BCRC 81028 / 2530) (Pelodictyon luteolum).